Consider the following 764-residue polypeptide: Oxysterol-binding protein-related protein 10 (764 aa).

A disordered region spans residues 1 to 74 (MERAVQGTDG…PSGGGGRRRE (74 aa)). 2 stretches are compositionally biased toward low complexity: residues 15–47 (NSSS…SAAA) and 55–65 (RSSPGSVAASP). 2 positions are modified to phosphoserine: Ser29 and Ser30. Arg38 carries the post-translational modification Omega-N-methylarginine. 3 positions are modified to phosphoserine: Ser57, Ser60, and Ser64. Residues 74–171 (EPALEGVLSK…WVTQLRACAK (98 aa)) form the PH domain. Thr196 carries the phosphothreonine modification. A phosphoserine mark is found at Ser201, Ser209, and Ser223. Disordered regions lie at residues 304–335 (GQPS…NGTL) and 354–391 (AEDE…TELG). The segment covering 359 to 370 (TSQPEPEPNSGS) has biased composition (polar residues). Acidic residues predominate over residues 374–389 (LSEDEKSDNEDKEETE). A 1,2-diacyl-sn-glycero-3-phospho-(1D-myo-inositol 4-phosphate) contacts are provided by residues 413-418 (LTKVVL) and 477-480 (KPYN). A 1,2-diacyl-sn-glycero-3-phospho-L-serine is bound by residues 413–418 (LTKVVL) and Asn480. Residues 501-520 (KRTASRSPASCHEHPMADDP) form a disordered region. Basic and acidic residues predominate over residues 511-520 (CHEHPMADDP). 535-536 (HH) serves as a coordination point for a 1,2-diacyl-sn-glycero-3-phospho-(1D-myo-inositol 4-phosphate). Ser561 contributes to the a 1,2-diacyl-sn-glycero-3-phospho-L-serine binding site. A coiled-coil region spans residues 713–740 (DIDAATEQKRHLEEKQRVEERKRENLRT). A 1,2-diacyl-sn-glycero-3-phospho-(1D-myo-inositol 4-phosphate)-binding residues include Lys721, Glu725, and Arg729.

Belongs to the OSBP family. Interacts with OSBPL9. Interacts with DIAPH1.

The protein localises to the cytoplasm. The protein resides in the cytoskeleton. Its function is as follows. Probable lipid transporter involved in lipid countertransport between the endoplasmic reticulum and the plasma membrane. Its ability to bind phosphatidylserine, suggests that it specifically exchanges phosphatidylserine with phosphatidylinositol 4-phosphate (PI4P), delivering phosphatidylserine to the plasma membrane in exchange for PI4P. Plays a role in negative regulation of lipid biosynthesis. Negatively regulates APOB secretion from hepatocytes. Binds cholesterol and acidic phospholipids. Also binds 25-hydroxycholesterol. Binds phosphatidylserine. This Homo sapiens (Human) protein is Oxysterol-binding protein-related protein 10 (OSBPL10).